The following is a 496-amino-acid chain: UDP-N-acetylmuramoyl-L-alanyl-D-glutamate--2,6-diaminopimelate ligase (496 aa).

Position 32 (Ser32) interacts with UDP-N-acetyl-alpha-D-muramoyl-L-alanyl-D-glutamate. ATP is bound at residue Gly116–Thr122. UDP-N-acetyl-alpha-D-muramoyl-L-alanyl-D-glutamate is bound by residues Thr158–Thr159, Ser185, Gln191, and Arg193. Lys225 is modified (N6-carboxylysine). Meso-2,6-diaminopimelate contacts are provided by residues Arg389, Asp413–Arg416, Gly464, and Glu468. A Meso-diaminopimelate recognition motif motif is present at residues Asp413–Arg416.

It belongs to the MurCDEF family. MurE subfamily. Requires Mg(2+) as cofactor. In terms of processing, carboxylation is probably crucial for Mg(2+) binding and, consequently, for the gamma-phosphate positioning of ATP.

It is found in the cytoplasm. The enzyme catalyses UDP-N-acetyl-alpha-D-muramoyl-L-alanyl-D-glutamate + meso-2,6-diaminopimelate + ATP = UDP-N-acetyl-alpha-D-muramoyl-L-alanyl-gamma-D-glutamyl-meso-2,6-diaminopimelate + ADP + phosphate + H(+). It participates in cell wall biogenesis; peptidoglycan biosynthesis. Functionally, catalyzes the addition of meso-diaminopimelic acid to the nucleotide precursor UDP-N-acetylmuramoyl-L-alanyl-D-glutamate (UMAG) in the biosynthesis of bacterial cell-wall peptidoglycan. The polypeptide is UDP-N-acetylmuramoyl-L-alanyl-D-glutamate--2,6-diaminopimelate ligase (Nostoc sp. (strain PCC 7120 / SAG 25.82 / UTEX 2576)).